Reading from the N-terminus, the 1074-residue chain is Transmembrane protein 132E (1074 aa).

The first 23 residues, 1 to 23 (MAPGMSGRRGAALLCLSVLLAHA), serve as a signal peptide directing secretion. Residues 26-894 (RSHPASPSPP…LTDLEIGMYA (869 aa)) are Extracellular-facing. N70 and N91 each carry an N-linked (GlcNAc...) asparagine glycan. Disordered regions lie at residues 205-224 (PAAPPSARRKSPDGLEPEAA) and 243-266 (GGCGSARRGPGPGPGAAARAESPT). Residues 247-262 (SARRGPGPGPGAAARA) show a composition bias toward low complexity. N-linked (GlcNAc...) asparagine glycans are attached at residues N320 and N401. Disordered stretches follow at residues 564 to 587 (RRSARESEDEEEEEEERRQSANRG) and 816 to 867 (GRDE…PVPP). Positions 843-854 (GAGPPGTAIPAG) are enriched in low complexity. The chain crosses the membrane as a helical span at residues 895 to 915 (LLGVFCLAILVFLINCIVFVL). The Cytoplasmic portion of the chain corresponds to 916 to 1074 (RYRHKRIPPE…NYMRRIKDIA (159 aa)). Positions 962–1064 (VPACCHGDHH…TRPTPPPDLH (103 aa)) are disordered. 2 stretches are compositionally biased toward low complexity: residues 973-985 (SGSSQTSVQSQVH) and 1016-1026 (FTTFTTLPTEE). The span at 1035 to 1044 (GEEEDEEEDL) shows a compositional bias: acidic residues.

Belongs to the TMEM132 family. In terms of tissue distribution, widely expressed, with highest levels in the cochlea. In the cochlea, detected in spiral ganglion, the organ of Corti and stria vascularis. In the organ of Corti, prominently expressed in the outer and inner hair cells, especially at the apical and basal region of the outer hair cell body (at protein level).

The protein resides in the membrane. Functionally, required for normal inner ear hair cell function and hearing. This chain is Transmembrane protein 132E (Tmem132e), found in Mus musculus (Mouse).